The following is a 106-amino-acid chain: Putative membrane protein insertion efficiency factor (106 aa).

Belongs to the UPF0161 family.

The protein resides in the cell inner membrane. In terms of biological role, could be involved in insertion of integral membrane proteins into the membrane. The polypeptide is Putative membrane protein insertion efficiency factor (Acinetobacter baumannii (strain SDF)).